Consider the following 105-residue polypeptide: Large ribosomal subunit protein uL24 (105 aa).

Belongs to the universal ribosomal protein uL24 family. As to quaternary structure, part of the 50S ribosomal subunit.

Its function is as follows. One of two assembly initiator proteins, it binds directly to the 5'-end of the 23S rRNA, where it nucleates assembly of the 50S subunit. In terms of biological role, one of the proteins that surrounds the polypeptide exit tunnel on the outside of the subunit. In Mycobacterium leprae (strain Br4923), this protein is Large ribosomal subunit protein uL24.